The following is a 446-amino-acid chain: Putrescine N-hydroxylase (446 aa).

6 residues coordinate FAD: phenylalanine 17, aspartate 37, serine 38, lysine 39, tryptophan 44, and histidine 45. 3 residues coordinate NADP(+): threonine 54, glutamine 56, and arginine 98. Glutamine 56 provides a ligand contact to FAD. Residue valine 121 participates in FAD binding. Residues serine 199, lysine 223, tyrosine 267, and leucine 301 each coordinate NADP(+). FAD contacts are provided by asparagine 378, proline 389, and leucine 391.

This sequence belongs to the lysine N(6)-hydroxylase/L-ornithine N(5)-oxygenase family. In terms of assembly, homotetramer. FAD is required as a cofactor.

It catalyses the reaction putrescine + NADPH + O2 = N-hydroxyputrescine + NADP(+) + H2O. It participates in siderophore biosynthesis. N-hydroxylating monooxygenase involved in the biosynthesis of fimsbactin A, the major siderophore produced by A.baumannii. Catalyzes the N-hydroxylation of the aliphatic diamine putrescine into N-hydroxyputrescine (NHP). Putrescine is the preferred substrate, but the enzyme can also catalyze the N-hydroxylation of cadaverine, with 4-fold lower catalytic efficiency. Cannot use lysine or ornithine as substrates. Uses both NADPH and NADH as the reducing cofactor with a preference for NADPH. This Acinetobacter baumannii (strain ATCC 17978 / DSM 105126 / CIP 53.77 / LMG 1025 / NCDC KC755 / 5377) protein is Putrescine N-hydroxylase.